The sequence spans 451 residues: Glycine--tRNA ligase (451 aa).

Substrate is bound by residues arginine 94 and glutamate 164. Residues arginine 196–glutamate 198, phenylalanine 206–phenylalanine 211, glutamate 281–leucine 282, and glycine 325–arginine 328 contribute to the ATP site. Residue phenylalanine 211–glutamate 215 coordinates substrate. Position 321–325 (glutamate 321–glycine 325) interacts with substrate.

Belongs to the class-II aminoacyl-tRNA synthetase family. As to quaternary structure, homodimer.

It is found in the cytoplasm. It catalyses the reaction tRNA(Gly) + glycine + ATP = glycyl-tRNA(Gly) + AMP + diphosphate. Its function is as follows. Catalyzes the attachment of glycine to tRNA(Gly). In Mesoplasma florum (strain ATCC 33453 / NBRC 100688 / NCTC 11704 / L1) (Acholeplasma florum), this protein is Glycine--tRNA ligase.